A 163-amino-acid chain; its full sequence is NADPH-dependent 7-cyano-7-deazaguanine reductase (163 aa).

The Thioimide intermediate role is filled by Cys-54. The active-site Proton donor is the Asp-61. Substrate is bound by residues Val-76–Ser-78 and His-95–Glu-96.

It belongs to the GTP cyclohydrolase I family. QueF type 1 subfamily.

The protein localises to the cytoplasm. The enzyme catalyses 7-aminomethyl-7-carbaguanine + 2 NADP(+) = 7-cyano-7-deazaguanine + 2 NADPH + 3 H(+). The protein operates within tRNA modification; tRNA-queuosine biosynthesis. Its function is as follows. Catalyzes the NADPH-dependent reduction of 7-cyano-7-deazaguanine (preQ0) to 7-aminomethyl-7-deazaguanine (preQ1). The polypeptide is NADPH-dependent 7-cyano-7-deazaguanine reductase (Streptococcus thermophilus (strain CNRZ 1066)).